We begin with the raw amino-acid sequence, 348 residues long: Secreted frizzled-related protein 4 (348 aa).

Positions 1 to 18 (MLLSILVALCLCVRLALG) are cleaved as a signal peptide. Residues 19–139 (VRGAPCEAVR…VYDRGVCISP (121 aa)) form the FZ domain. 5 disulfides stabilise this stretch: C24–C85, C32–C78, C69–C108, C97–C136, and C101–C125. 2 N-linked (GlcNAc...) asparagine glycosylation sites follow: N38 and N68. Residues N116, N194, and N240 are each glycosylated (N-linked (GlcNAc...) asparagine). Residues 178-296 (CKCKKVKPTL…WEERLQEQQR (119 aa)) form the NTR domain. Basic and acidic residues predominate over residues 289–303 (ERLQEQQRTTQDKKQ). The tract at residues 289–348 (ERLQEQQRTTQDKKQIASRTSRSNPPKPKGRSPASKPASPKKNIKARSAPKKSNPKKSTS) is disordered. Positions 330 to 348 (KNIKARSAPKKSNPKKSTS) are enriched in basic residues.

The protein belongs to the secreted frizzled-related protein (sFRP) family. Expressed in the involuting mammary gland, ovarian corpus luteum and prostate. In ovaries, low levels found in granulosa cells. High levels in corpora lutea of pregnant animals.

Its subcellular location is the secreted. Functionally, soluble frizzled-related proteins (sFRPS) function as modulators of Wnt signaling through direct interaction with Wnts. They have a role in regulating cell growth and differentiation in specific cell types. SFRP4 plays a role in bone morphogenesis. May also act as a regulator of adult uterine morphology and function. May also increase apoptosis during ovulation possibly through modulation of FZ1/FZ4/WNT4 signaling. Has phosphaturic effects by specifically inhibiting sodium-dependent phosphate uptake. The protein is Secreted frizzled-related protein 4 (Sfrp4) of Rattus norvegicus (Rat).